Reading from the N-terminus, the 508-residue chain is Bifunctional purine biosynthesis protein PurH (508 aa).

An MGS-like domain is found at 1-144; the sequence is MTRALLSVSD…KNFASVLPIV (144 aa).

Belongs to the PurH family.

The enzyme catalyses (6R)-10-formyltetrahydrofolate + 5-amino-1-(5-phospho-beta-D-ribosyl)imidazole-4-carboxamide = 5-formamido-1-(5-phospho-D-ribosyl)imidazole-4-carboxamide + (6S)-5,6,7,8-tetrahydrofolate. It catalyses the reaction IMP + H2O = 5-formamido-1-(5-phospho-D-ribosyl)imidazole-4-carboxamide. It participates in purine metabolism; IMP biosynthesis via de novo pathway; 5-formamido-1-(5-phospho-D-ribosyl)imidazole-4-carboxamide from 5-amino-1-(5-phospho-D-ribosyl)imidazole-4-carboxamide (10-formyl THF route): step 1/1. The protein operates within purine metabolism; IMP biosynthesis via de novo pathway; IMP from 5-formamido-1-(5-phospho-D-ribosyl)imidazole-4-carboxamide: step 1/1. The polypeptide is Bifunctional purine biosynthesis protein PurH (Leuconostoc mesenteroides subsp. mesenteroides (strain ATCC 8293 / DSM 20343 / BCRC 11652 / CCM 1803 / JCM 6124 / NCDO 523 / NBRC 100496 / NCIMB 8023 / NCTC 12954 / NRRL B-1118 / 37Y)).